A 200-amino-acid polypeptide reads, in one-letter code: MMLFGKISQQLCGLKKLPWSRDSRYFWGWLNAVFNKVDHDRIRDVGPDRAASEWLLRCGAMVRYHGQQRWQKDYNHLPTGPLDKYKIQAIDATDSCIMSIGFDHMEGLQYVEKIRLCKCHYIEDGCLERLSQLENLQKSMLEMEIISCGNVTDKGIIALHHFRNLKYLFLSDLPGVKEKEKIVQAFKTSLPSLELKLDLK.

The transit peptide at 1–25 (MMLFGKISQQLCGLKKLPWSRDSRY) directs the protein to the mitochondrion. Residues 1–61 (MMLFGKISQQ…SEWLLRCGAM (61 aa)) are N-terminal domain. Position 59 (glycine 59) interacts with Mg(2+). LRR repeat units lie at residues 62-87 (VRYH…KYKI), 88-116 (QAID…KIRL), 117-141 (CKCH…KSML), and 142-173 (EMEI…LSDL). Threonine 93 contacts Mg(2+).

This sequence belongs to the ATP synthase subunit s family. In terms of assembly, homotetramer. Associates with ATP synthase.

Its subcellular location is the mitochondrion. It localises to the mitochondrion inner membrane. In terms of biological role, involved in regulation of mitochondrial membrane ATP synthase. Necessary for H(+) conduction of ATP synthase. Facilitates energy-driven catalysis of ATP synthesis by blocking a proton leak through an alternative proton exit pathway. The polypeptide is ATP synthase subunit s, mitochondrial (DMAC2L) (Bos taurus (Bovine)).